A 497-amino-acid polypeptide reads, in one-letter code: Trichoplein keratin filament-binding protein (497 aa).

Coiled-coil stretches lie at residues 67–140 (HCEK…LLYE), 166–271 (ATQK…ELGR), and 327–479 (MKQV…AKTM). An interaction with keratin proteins region spans residues 72 to 457 (KEEKRKILEL…WEAARQEEEE (386 aa)). A disordered region spans residues 167–188 (TQKEEKKQQEATEKQENKRLEN). Basic and acidic residues predominate over residues 168–188 (QKEEKKQQEATEKQENKRLEN). Residues 258-424 (RQMAALRRKT…KQLAQRAKEE (167 aa)) are trichohyalin/plectin homology domain. A disordered region spans residues 441–497 (AERQGQEWEAARQEEEEEEEARQAEEHSNALLQQEAKTMAEKGYQPKLHGHLRIAWD). Residues 444–453 (QGQEWEAARQ) show a composition bias toward basic and acidic residues. The span at 488–497 (LHGHLRIAWD) shows a compositional bias: basic residues.

It belongs to the TCHP family. In terms of assembly, interacts specifically with keratin proteins including, KRT5, KRT6A, KRT8, KRT14, KRT16 and KRT18. Interacts with KCTD17. Ubiquitinated. Ubiquitination by the BCR(KCTD17) E3 ubiquitin ligase complex results in proteasomal degradation, and induces ciliogenesis. As to expression, expressed in all tissues examined, including brain, liver, small intestine, large intestine, lung and heart. Found concentrated in tubular structures within hepatocytes, and in the apical cortical region and desmosomes of the apical junctional domain in enterocytes of the small intestine. In the hair follicle, localized at the outer root sheath. Also expressed in blood vessels (at protein level).

It is found in the cytoplasm. The protein resides in the cytoskeleton. Its subcellular location is the cell membrane. The protein localises to the mitochondrion. It localises to the microtubule organizing center. It is found in the centrosome. Its function is as follows. Tumor suppressor which has the ability to inhibit cell growth and be pro-apoptotic during cell stress. May act as a 'capping' or 'branching' protein for keratin filaments in the cell periphery. May regulate K8/K18 filament and desmosome organization mainly at the apical or peripheral regions of simple epithelial cells. Is a negative regulator of ciliogenesis. In Mus musculus (Mouse), this protein is Trichoplein keratin filament-binding protein.